The sequence spans 350 residues: Spermidine/putrescine import ATP-binding protein PotA (350 aa).

The ABC transporter domain occupies 6–236 (LELRNVTKDY…PENLWVAKFI (231 aa)). 38 to 45 (GPSGCGKT) serves as a coordination point for ATP.

This sequence belongs to the ABC transporter superfamily. Spermidine/putrescine importer (TC 3.A.1.11.1) family. As to quaternary structure, the complex is composed of two ATP-binding proteins (PotA), two transmembrane proteins (PotB and PotC) and a solute-binding protein (PotD).

The protein localises to the cell membrane. The catalysed reaction is ATP + H2O + polyamine-[polyamine-binding protein]Side 1 = ADP + phosphate + polyamineSide 2 + [polyamine-binding protein]Side 1.. In terms of biological role, part of the ABC transporter complex PotABCD involved in spermidine/putrescine import. Responsible for energy coupling to the transport system. This chain is Spermidine/putrescine import ATP-binding protein PotA, found in Mesoplasma florum (strain ATCC 33453 / NBRC 100688 / NCTC 11704 / L1) (Acholeplasma florum).